The primary structure comprises 90 residues: U7-theraphotoxin-Hhn1g (90 aa).

The signal sequence occupies residues 1–19 (MKTAIFTVVLALAVFAVLS). A propeptide spanning residues 20–50 (FGWEANEKALSEEFTELIHEKEAASETEARE) is cleaved from the precursor. Disulfide bonds link Cys-51/Cys-65, Cys-58/Cys-70, and Cys-64/Cys-81.

Belongs to the neurotoxin 10 (Hwtx-1) family. 13 (Hntx-13) subfamily. In terms of tissue distribution, expressed by the venom gland.

It localises to the secreted. Ion channel inhibitor. The chain is U7-theraphotoxin-Hhn1g from Cyriopagopus hainanus (Chinese bird spider).